Here is a 164-residue protein sequence, read N- to C-terminus: FMN reductase (NADH) RutF (164 aa).

This sequence belongs to the non-flavoprotein flavin reductase family. RutF subfamily.

It catalyses the reaction FMNH2 + NAD(+) = FMN + NADH + 2 H(+). Catalyzes the reduction of FMN to FMNH2 which is used to reduce pyrimidine by RutA via the Rut pathway. This is FMN reductase (NADH) RutF from Escherichia coli O6:K15:H31 (strain 536 / UPEC).